Consider the following 1203-residue polypeptide: Chromosome partition protein Smc (1203 aa).

32-39 (PNGSGKSN) serves as a coordination point for ATP. 3 coiled-coil regions span residues 167–203 (ILKY…RQLK), 250–288 (MMRR…SVQQ), and 327–497 (DVLE…LERK). Residues 511 to 622 (GLLGSIAKLV…VVNYLAEALG (112 aa)) form the SMC hinge domain. Coiled-coil stretches lie at residues 657-689 (EVTS…ALSE), 720-765 (RLGQ…NVEQ), and 976-1030 (YDRA…RKDL).

Belongs to the SMC family. Homodimer.

It localises to the cytoplasm. In terms of biological role, required for chromosome condensation and partitioning. This Mycobacterium leprae (strain TN) protein is Chromosome partition protein Smc.